We begin with the raw amino-acid sequence, 430 residues long: MKVALPKGVFDIFPYITDAKHMWRHTSLWHRVEDVIHEVCDLYGFSEVRTPVFEKSEVFLHAGEQSDIVKKEMYTFLDKKGRSLTLRPEGTAPIVRSFIDNSMNQRDDNKFYYILPMFRYERQQSGRYRQHHQFGLEAIGVRHPLRDAEVLSLLWNFYSAVGLQGMQIQLNFLGGGTTRQRYDKVLREYFLEHFESLSSLSKERFNTNLLRILDSKETEDQEIIKSAPSILEYISDEDQKYFDEILTALNSLDIPHSINPKLVRGLDYYTDVVFEAITTFGGHSYALGGGGRYDGLVAASGGPSTPACGFGVGLERVMQTLLAQGNITLPSSHKLRLIPVESQADSFCFIWAQHLRGLGIPTEIDWTHKKLKNALKTADAEKATFVCLVGERELLSEQLTIKDMSSRQEFSGSKQEVEQRLLYEIQNTSL.

This sequence belongs to the class-II aminoacyl-tRNA synthetase family. As to quaternary structure, homodimer.

It is found in the cytoplasm. It catalyses the reaction tRNA(His) + L-histidine + ATP = L-histidyl-tRNA(His) + AMP + diphosphate + H(+). In Chlamydia felis (strain Fe/C-56) (Chlamydophila felis), this protein is Histidine--tRNA ligase.